A 394-amino-acid chain; its full sequence is Large ribosomal subunit protein bL27m (394 aa).

The N-terminal 34 residues, 1-34 (MSFIKQVGKLIRPNDYSSSIFQTSFLNNVIQVRT), are a transit peptide targeting the mitochondrion. 2 disordered regions span residues 36–57 (TKRA…LGPK) and 145–181 (AEAE…QRAS). The span at 145–170 (AEAEKEENHMSRKEFLQQPELEKTRQ) shows a compositional bias: basic and acidic residues.

It belongs to the bacterial ribosomal protein bL27 family.

The protein resides in the mitochondrion. In terms of biological role, component of the large subunit of mitochondrial ribosome. The protein is Large ribosomal subunit protein bL27m (MRPL2) of Debaryomyces hansenii (strain ATCC 36239 / CBS 767 / BCRC 21394 / JCM 1990 / NBRC 0083 / IGC 2968) (Yeast).